The primary structure comprises 178 residues: SPbeta prophage-derived uncharacterized protein YonC (178 aa).

This chain is SPbeta prophage-derived uncharacterized protein YonC (yonC), found in Bacillus subtilis (strain 168).